Reading from the N-terminus, the 433-residue chain is MDKIPEELEKILQITREQNRWRRLETINLIPSENVMSPLAESVYMSDFMYRYAEGKPFKRYYQGTKYADEIEELAMKLVSEISSSKYADLRAVSGTIANAGVFRVLADSGDKAVIAPVQAGAHVSHTRFGTLGALGIEQIEMPYDQESMNVDVDKAIKLIEEVKPKFVTLGGSLYLFPHPVKELAPHVHAVGAKLVYDSAHVYGLIVGKAWHNPLEEGADVVTASTHKTFPGPQGGLIVTNDDSLYKKVSDTIFPWFVSNHHLHRLPSTAITALEMKYFGKEYAQQIVKNAKALAEALAAEGFKVIGEHLGFTKSHQVAIDVRNLGGGAKVAKLFEEANIIANKNLLPYDPPSAVKDPSGVRLGVQEMTRFGMKEEEMRIIARLMREVAIENKDVKEVKKKVTEFRKEFLEVKYTFTNVDLAKYSSKVISLLI.

122 to 124 (AHV) is a (6S)-5,6,7,8-tetrahydrofolate binding site. K228 carries the N6-(pyridoxal phosphate)lysine modification.

Belongs to the SHMT family. In terms of assembly, homodimer. Pyridoxal 5'-phosphate is required as a cofactor.

It localises to the cytoplasm. It functions in the pathway amino-acid biosynthesis; glycine biosynthesis; glycine from L-serine: step 1/1. In terms of biological role, catalyzes the reversible interconversion of serine and glycine with a modified folate serving as the one-carbon carrier. Also exhibits a pteridine-independent aldolase activity toward beta-hydroxyamino acids, producing glycine and aldehydes, via a retro-aldol mechanism. In Sulfolobus acidocaldarius (strain ATCC 33909 / DSM 639 / JCM 8929 / NBRC 15157 / NCIMB 11770), this protein is Serine hydroxymethyltransferase.